A 103-amino-acid chain; its full sequence is UPF0145 protein HH_1800 (103 aa).

This sequence belongs to the UPF0145 family.

The polypeptide is UPF0145 protein HH_1800 (Helicobacter hepaticus (strain ATCC 51449 / 3B1)).